An 835-amino-acid polypeptide reads, in one-letter code: Leucine--tRNA ligase (835 aa).

A 'HIGH' region motif is present at residues 41 to 52 (PYPSGQGLHVGH). The short motif at 611 to 615 (KMSKS) is the 'KMSKS' region element. Residue K614 participates in ATP binding.

Belongs to the class-I aminoacyl-tRNA synthetase family.

Its subcellular location is the cytoplasm. It catalyses the reaction tRNA(Leu) + L-leucine + ATP = L-leucyl-tRNA(Leu) + AMP + diphosphate. In Elusimicrobium minutum (strain Pei191), this protein is Leucine--tRNA ligase.